Here is a 349-residue protein sequence, read N- to C-terminus: uncharacterized protein (349 aa).

A helical membrane pass occupies residues 17–37; sequence VIAIVSTGLVFAMTLVLTGLV. Residues 111 to 131 are disordered; it reads FGAPEHGPGMPRVSDGRAPST. Helical transmembrane passes span 230-250, 284-304, and 308-328; these read AITV…GSVV, VVAL…APLF, and VVVP…IGLL.

The protein belongs to the ABC-4 integral membrane protein family.

It is found in the cell membrane. This is an uncharacterized protein from Mycobacterium bovis (strain ATCC BAA-935 / AF2122/97).